The following is a 205-amino-acid chain: Golgi apparatus membrane protein TVP23 homolog B (205 aa).

Met1 carries the N-acetylmethionine modification. Positions Met1–Glu21 are enriched in acidic residues. Positions Met1–Arg27 are disordered. 4 consecutive transmembrane segments (helical) span residues Pro34–Leu53, Cys54–Leu72, Ile126–Leu146, and Lys152–Ile172.

The protein belongs to the TVP23 family.

The protein resides in the membrane. This chain is Golgi apparatus membrane protein TVP23 homolog B (Tvp23b), found in Mus musculus (Mouse).